The following is a 547-amino-acid chain: Glucose-6-phosphate isomerase (547 aa).

Glu354 acts as the Proton donor in catalysis. Active-site residues include His385 and Lys513.

It belongs to the GPI family.

It localises to the cytoplasm. It carries out the reaction alpha-D-glucose 6-phosphate = beta-D-fructose 6-phosphate. The protein operates within carbohydrate biosynthesis; gluconeogenesis. Its pathway is carbohydrate degradation; glycolysis; D-glyceraldehyde 3-phosphate and glycerone phosphate from D-glucose: step 2/4. Its function is as follows. Catalyzes the reversible isomerization of glucose-6-phosphate to fructose-6-phosphate. The sequence is that of Glucose-6-phosphate isomerase from Endomicrobium trichonymphae.